Reading from the N-terminus, the 107-residue chain is MKATAALVAATLLLAVTLFHRAERNPISRSCEGANCVVDLTRCEYGDVTDFFGRKVCAKGPGDKCGGPYELHGKCGVGMDCRCGLCSGCSLHNLQCFFFEGGLPSSC.

A signal peptide spans 1–22; sequence MKATAALVAATLLLAVTLFHRA. A propeptide spanning residues 23 to 24 is cleaved from the precursor; the sequence is ER.

In terms of assembly, homodimer; disulfide-linked.

Its function is as follows. Neurosparins are multifunctional neurohormones: they inhibit the effects of juvenile hormone, stimulate fluid reabsorption of isolated recta and induces an increase in hemolymph lipid and trehalose levels. The polypeptide is Neuroparsin-A (Locusta migratoria (Migratory locust)).